Here is a 462-residue protein sequence, read N- to C-terminus: NAD-capped RNA hydrolase NUDT12 (462 aa).

ANK repeat units follow at residues 11–40, 45–74, and 78–98; these read EIVT…SLLN, NGWT…DRSI, and SRQT…ANLL. Lys185 is subject to N6-succinyllysine. The Zn(2+) site is built by Cys284 and Cys287. Residue Lys292 is modified to N6-succinyllysine. Residues Cys302 and Cys307 each contribute to the Zn(2+) site. Substrate is bound by residues Tyr318, 354–356, Glu370, Glu374, and Glu415; that span reads AGF. One can recognise a Nudix hydrolase domain in the interval 319 to 453; sequence PRVDPVVIMQ…SRAIAHQLIK (135 aa). Positions 354, 370, 374, and 415 each coordinate Mg(2+). The short motif at 355 to 376 is the Nudix box element; sequence GFIEPGETIEDAVRREVEEESG. A Microbody targeting signal motif is present at residues 460–462; that stretch reads PNL.

Belongs to the Nudix hydrolase family. NudC subfamily. Homodimer. Homodimerization is essential for its catalytic activity and protein stability. Interacts (via ANK repeats) with BLMH. Requires Mg(2+) as cofactor. Zn(2+) serves as cofactor.

The protein localises to the cytoplasm. The protein resides in the peroxisome. It localises to the cytoplasmic granule. The catalysed reaction is a 5'-end NAD(+)-phospho-ribonucleoside in mRNA + H2O = a 5'-end phospho-adenosine-phospho-ribonucleoside in mRNA + beta-nicotinamide D-ribonucleotide + 2 H(+). It carries out the reaction NAD(+) + H2O = beta-nicotinamide D-ribonucleotide + AMP + 2 H(+). It catalyses the reaction NADH + H2O = reduced beta-nicotinamide D-ribonucleotide + AMP + 2 H(+). The enzyme catalyses NADPH + H2O = reduced beta-nicotinamide D-ribonucleotide + adenosine 2',5'-bisphosphate + 2 H(+). In terms of biological role, mRNA decapping enzyme that specifically removes the nicotinamide adenine dinucleotide (NAD) cap from a subset of mRNAs by hydrolyzing the diphosphate linkage to produce nicotinamide mononucleotide (NMN) and 5' monophosphate mRNA. The NAD-cap is present at the 5'-end of some RNAs; in contrast to the canonical N7 methylguanosine (m7G) cap, the NAD cap promotes mRNA decay. Preferentially acts on NAD-capped transcripts in response to nutrient stress. Also acts on free nicotinamide adenine dinucleotide molecules: hydrolyzes NAD(H) into NMN(H) and AMP, and NADPH into NMNH and 2',5'-ADP. May act to regulate the concentration of peroxisomal nicotinamide nucleotide cofactors required for oxidative metabolism in this organelle. Regulates the levels of circadian clock components PER1, PER2, PER3 and CRY2 in the liver. The chain is NAD-capped RNA hydrolase NUDT12 from Macaca fascicularis (Crab-eating macaque).